We begin with the raw amino-acid sequence, 441 residues long: Arginine biosynthesis bifunctional protein ArgJ, mitochondrial (441 aa).

6 residues coordinate substrate: Thr177, Lys204, Thr215, Glu301, Asn436, and Ser441. Thr215 functions as the Nucleophile in the catalytic mechanism.

This sequence belongs to the ArgJ family. As to quaternary structure, heterodimer of an alpha and a beta chain. Post-translationally, the alpha and beta chains are autoproteolytically processed from a single precursor protein within the mitochondrion.

Its subcellular location is the mitochondrion matrix. The catalysed reaction is N(2)-acetyl-L-ornithine + L-glutamate = N-acetyl-L-glutamate + L-ornithine. It catalyses the reaction L-glutamate + acetyl-CoA = N-acetyl-L-glutamate + CoA + H(+). The protein operates within amino-acid biosynthesis; L-arginine biosynthesis; L-ornithine and N-acetyl-L-glutamate from L-glutamate and N(2)-acetyl-L-ornithine (cyclic): step 1/1. It functions in the pathway amino-acid biosynthesis; L-arginine biosynthesis; N(2)-acetyl-L-ornithine from L-glutamate: step 1/4. Its function is as follows. Catalyzes two activities which are involved in the cyclic version of arginine biosynthesis: the synthesis of acetylglutamate from glutamate and acetyl-CoA, and of ornithine by transacetylation between acetylornithine and glutamate. In Kluyveromyces lactis (strain ATCC 8585 / CBS 2359 / DSM 70799 / NBRC 1267 / NRRL Y-1140 / WM37) (Yeast), this protein is Arginine biosynthesis bifunctional protein ArgJ, mitochondrial.